The chain runs to 606 residues: Putative amino acid transporter AAT1 (606 aa).

A disordered region spans residues 1-156 (MNKKYGTSSN…DEEGTNKPKR (156 aa)). 2 stretches are compositionally biased toward basic and acidic residues: residues 12 to 25 (HDNK…ADKN) and 72 to 89 (SDKK…ESSK). Over residues 140–149 (SDGDYTNDEE) the composition is skewed to acidic residues. The next 11 membrane-spanning stretches (helical) occupy residues 175–194 (TVLF…PYVF), 200–225 (ILSI…TSSL), 246–271 (TIID…SNFL), 283–301 (LFTN…ILPI), 313–332 (FLIF…GLQT), 352–372 (HFFK…NACF), 393–412 (VILQ…FSFL), 428–449 (VSIL…PLNF), 522–539 (MWIS…ACKV), 545–567 (VIGI…LIYY), and 579–605 (RYST…LNLI).

This sequence belongs to the amino acid/polyamine transporter 2 family.

It is found in the vacuole membrane. Functionally, putative amino acid transporter. Probably transports tryptophan. Involved in maintaining the osmotic homeostasis of the digestive vacuole. Important for the timely development and growth of the asexual-stage parasites and male gametocyte maturation. The protein is Putative amino acid transporter AAT1 of Plasmodium falciparum (isolate 3D7).